We begin with the raw amino-acid sequence, 166 residues long: Regulator of ribonuclease activity A (166 aa).

It belongs to the RraA family. Homotrimer. Binds to both RNA-binding sites in the C-terminal region of Rne and to RhlB.

It localises to the cytoplasm. Functionally, globally modulates RNA abundance by binding to RNase E (Rne) and regulating its endonucleolytic activity. Can modulate Rne action in a substrate-dependent manner by altering the composition of the degradosome. Modulates RNA-binding and helicase activities of the degradosome. The chain is Regulator of ribonuclease activity A from Pasteurella multocida (strain Pm70).